A 165-amino-acid polypeptide reads, in one-letter code: V-type proton ATPase 16 kDa proteolipid subunit (165 aa).

Over 1-10 the chain is Lumenal; that stretch reads MSSVFSGDET. A helical membrane pass occupies residues 11-33; sequence APFFGFLGAAAALVFSCMGAAYG. The Cytoplasmic segment spans residues 34–55; sequence TAKSGVGVASMGVMRPELVMKS. Residues 56-76 traverse the membrane as a helical segment; that stretch reads IVPVVMAGVLGIYGLIIAVII. The Lumenal segment spans residues 77-95; it reads STGINPKAKPYFLFDGYAH. A helical membrane pass occupies residues 96 to 117; that stretch reads LSSGLACGLAGLAAGMAIGIVG. The Cytoplasmic portion of the chain corresponds to 118–129; it reads DAGVRANAQQPK. The chain crosses the membrane as a helical span at residues 130–155; it reads LFVGMILILIFAEALALYGLIVGIIL. Over 156-165 the chain is Lumenal; the sequence is SSRAGQSRAD.

It belongs to the V-ATPase proteolipid subunit family. In terms of assembly, V-ATPase is a heteromultimeric enzyme composed of a peripheral catalytic V1 complex (main components: subunits A, B, C, D, E, and F) attached to an integral membrane V0 proton pore complex (main component: the proteolipid protein; which is present as a hexamer that forms the proton-conducting pore).

Its subcellular location is the vacuole membrane. Functionally, proton-conducting pore forming subunit of the membrane integral V0 complex of vacuolar ATPase. V-ATPase is responsible for acidifying a variety of intracellular compartments in eukaryotic cells. In Avena sativa (Oat), this protein is V-type proton ATPase 16 kDa proteolipid subunit (VATP-P1).